We begin with the raw amino-acid sequence, 172 residues long: 3-hydroxydecanoyl-[acyl-carrier-protein] dehydratase (172 aa).

H71 is a catalytic residue.

It belongs to the thioester dehydratase family. FabA subfamily. In terms of assembly, homodimer.

It is found in the cytoplasm. The enzyme catalyses a (3R)-hydroxyacyl-[ACP] = a (2E)-enoyl-[ACP] + H2O. It carries out the reaction (3R)-hydroxydecanoyl-[ACP] = (2E)-decenoyl-[ACP] + H2O. It catalyses the reaction (2E)-decenoyl-[ACP] = (3Z)-decenoyl-[ACP]. The protein operates within lipid metabolism; fatty acid biosynthesis. In terms of biological role, necessary for the introduction of cis unsaturation into fatty acids. Catalyzes the dehydration of (3R)-3-hydroxydecanoyl-ACP to E-(2)-decenoyl-ACP and then its isomerization to Z-(3)-decenoyl-ACP. Can catalyze the dehydratase reaction for beta-hydroxyacyl-ACPs with saturated chain lengths up to 16:0, being most active on intermediate chain length. In Blochmanniella pennsylvanica (strain BPEN), this protein is 3-hydroxydecanoyl-[acyl-carrier-protein] dehydratase.